The following is a 498-amino-acid chain: ATP synthase subunit beta, chloroplastic (498 aa).

Thr-6 bears the Phosphothreonine mark. Position 13 is a phosphoserine (Ser-13). An ATP-binding site is contributed by 172–179 (GGAGVGKT).

The protein belongs to the ATPase alpha/beta chains family. As to quaternary structure, F-type ATPases have 2 components, CF(1) - the catalytic core - and CF(0) - the membrane proton channel. CF(1) has five subunits: alpha(3), beta(3), gamma(1), delta(1), epsilon(1). CF(0) has four main subunits: a(1), b(1), b'(1) and c(9-12).

It localises to the plastid. Its subcellular location is the chloroplast thylakoid membrane. The enzyme catalyses ATP + H2O + 4 H(+)(in) = ADP + phosphate + 5 H(+)(out). Produces ATP from ADP in the presence of a proton gradient across the membrane. The catalytic sites are hosted primarily by the beta subunits. This chain is ATP synthase subunit beta, chloroplastic, found in Capsella bursa-pastoris (Shepherd's purse).